The sequence spans 172 residues: Putative RNA polymerase II transcriptional coactivator (172 aa).

2 disordered regions span residues 1–43 and 123–172; these read MPPK…QDGN and QTDA…DDDE. A compositionally biased stretch (polar residues) spans 24-43; sequence GNTGKAQPQELTKGSDQDGN. The segment covering 131-144 has biased composition (basic and acidic residues); sequence PKVKALESNKESIK. The segment covering 158 to 172 has biased composition (acidic residues); it reads TSDEEEAAEDEDDDE.

Belongs to the transcriptional coactivator PC4 family.

It is found in the nucleus. In terms of biological role, general coactivator that functions cooperatively with TAFs and mediates functional interactions between upstream activators and the general transcriptional machinery. Binds single-stranded DNA. The protein is Putative RNA polymerase II transcriptional coactivator of Neurospora crassa (strain ATCC 24698 / 74-OR23-1A / CBS 708.71 / DSM 1257 / FGSC 987).